The primary structure comprises 159 residues: 2-C-methyl-D-erythritol 2,4-cyclodiphosphate synthase (159 aa).

Residues D8 and H10 each contribute to the a divalent metal cation site. 4-CDP-2-C-methyl-D-erythritol 2-phosphate is bound by residues 8–10 (DVH) and 34–35 (HS). Position 42 (H42) interacts with a divalent metal cation. Residues 56–58 (DIG), 61–65 (FPDTD), 100–106 (AQAPRML), 132–135 (TTTE), F139, and R142 each bind 4-CDP-2-C-methyl-D-erythritol 2-phosphate.

It belongs to the IspF family. Homotrimer. A divalent metal cation serves as cofactor.

The enzyme catalyses 4-CDP-2-C-methyl-D-erythritol 2-phosphate = 2-C-methyl-D-erythritol 2,4-cyclic diphosphate + CMP. It participates in isoprenoid biosynthesis; isopentenyl diphosphate biosynthesis via DXP pathway; isopentenyl diphosphate from 1-deoxy-D-xylulose 5-phosphate: step 4/6. Involved in the biosynthesis of isopentenyl diphosphate (IPP) and dimethylallyl diphosphate (DMAPP), two major building blocks of isoprenoid compounds. Catalyzes the conversion of 4-diphosphocytidyl-2-C-methyl-D-erythritol 2-phosphate (CDP-ME2P) to 2-C-methyl-D-erythritol 2,4-cyclodiphosphate (ME-CPP) with a corresponding release of cytidine 5-monophosphate (CMP). The polypeptide is 2-C-methyl-D-erythritol 2,4-cyclodiphosphate synthase (Escherichia coli O6:K15:H31 (strain 536 / UPEC)).